The following is a 572-amino-acid chain: Sulfate adenylyltransferase (572 aa).

Residues 1–169 (MANAPHGGVL…IEAVNKLNHY (169 aa)) are N-terminal. The segment at 170–393 (DYVALRYTPA…LRESNPPRAT (224 aa)) is catalytic. Q197 contributes to the sulfate binding site. ATP contacts are provided by residues 197-200 (QTRN) and 291-294 (GRDH). Active-site residues include T198, R199, and N200. R199 provides a ligand contact to sulfate. A295 contributes to the sulfate binding site. Residue V333 coordinates ATP. The segment at 394–572 (QGFTIFLTGY…LESQGFLERQ (179 aa)) is allosteric regulation domain; adenylyl-sulfate kinase-like. Residues 433 to 436 (DTVR), R450, 476 to 477 (IA), and R514 contribute to the 3'-phosphoadenylyl sulfate site.

It in the N-terminal section; belongs to the sulfate adenylyltransferase family. In the C-terminal section; belongs to the APS kinase family. Homohexamer. Dimer of trimers.

It localises to the cytoplasm. The enzyme catalyses sulfate + ATP + H(+) = adenosine 5'-phosphosulfate + diphosphate. It functions in the pathway sulfur metabolism; hydrogen sulfide biosynthesis; sulfite from sulfate: step 1/3. With respect to regulation, allosterically inhibited by 3'-phosphoadenosine 5'-phosphosulfate (PAPS). Catalyzes the first intracellular reaction of sulfate assimilation, forming adenosine-5'-phosphosulfate (APS) from inorganic sulfate and ATP. Plays an important role in sulfate activation as a component of the biosynthesis pathway of sulfur-containing amino acids. The polypeptide is Sulfate adenylyltransferase (Penicillium chrysogenum (Penicillium notatum)).